The chain runs to 180 residues: Large ribosomal subunit protein uL5 (180 aa).

It belongs to the universal ribosomal protein uL5 family. In terms of assembly, part of the 50S ribosomal subunit; part of the 5S rRNA/L5/L18/L25 subcomplex. Contacts the 5S rRNA and the P site tRNA. Forms a bridge to the 30S subunit in the 70S ribosome.

Functionally, this is one of the proteins that bind and probably mediate the attachment of the 5S RNA into the large ribosomal subunit, where it forms part of the central protuberance. In the 70S ribosome it contacts protein S13 of the 30S subunit (bridge B1b), connecting the 2 subunits; this bridge is implicated in subunit movement. Contacts the P site tRNA; the 5S rRNA and some of its associated proteins might help stabilize positioning of ribosome-bound tRNAs. This is Large ribosomal subunit protein uL5 from Chlamydia trachomatis serovar L2 (strain ATCC VR-902B / DSM 19102 / 434/Bu).